Consider the following 317-residue polypeptide: Probable cell division protein WhiA (317 aa).

Positions 281-314 (SLKELGKMLEPPVGKSGVNHRLRKIEKIAEELRK) form a DNA-binding region, H-T-H motif.

The protein belongs to the WhiA family.

In terms of biological role, involved in cell division and chromosome segregation. This chain is Probable cell division protein WhiA, found in Clostridium acetobutylicum (strain ATCC 824 / DSM 792 / JCM 1419 / IAM 19013 / LMG 5710 / NBRC 13948 / NRRL B-527 / VKM B-1787 / 2291 / W).